The sequence spans 234 residues: Thiamine import ATP-binding protein ThiQ (234 aa).

The 229-residue stretch at 2–230 folds into the ABC transporter domain; sequence LTLQQVHYYY…HSHPELVEFF (229 aa). Position 32–39 (32–39) interacts with ATP; that stretch reads GPSGAGKS.

Belongs to the ABC transporter superfamily. Thiamine importer (TC 3.A.1.19.1) family. The complex is composed of two ATP-binding proteins (ThiQ), two transmembrane proteins (ThiP) and a solute-binding protein (ThiB).

The protein localises to the cell inner membrane. It carries out the reaction thiamine(out) + ATP + H2O = thiamine(in) + ADP + phosphate + H(+). Its function is as follows. Part of the ABC transporter complex ThiBPQ involved in thiamine import. Responsible for energy coupling to the transport system. The chain is Thiamine import ATP-binding protein ThiQ from Vibrio vulnificus (strain CMCP6).